The following is an 85-amino-acid chain: Neurtoxin 10 (85 aa).

The signal sequence occupies residues 1-23 (MKFCVAVSLLIIASMAGVISVSG). The region spanning 24–85 (YDVYPRDYAE…NFLSVIWKHC (62 aa)) is the LCN-type CS-alpha/beta domain. 3 cysteine pairs are disulfide-bonded: Cys38–Cys60, Cys46–Cys65, and Cys50–Cys67.

It belongs to the long (3 C-C) scorpion toxin superfamily. Expressed by the venom gland.

It localises to the secreted. This chain is Neurtoxin 10, found in Lychas mucronatus (Chinese swimming scorpion).